The primary structure comprises 622 residues: Kinesin-like protein KIFC1 (622 aa).

The interval 1–88 (MKEALEPAKK…KRPGKRPDWD (88 aa)) is disordered. Residues 32–41 (SSLSQPQGPT) are compositionally biased toward polar residues. Residues 95 to 264 (DLTEELKCYR…QELKGNIRVF (170 aa)) are a coiled coil. The Kinesin motor domain maps to 260 to 612 (NIRVFCRVRP…LRFASKVNQC (353 aa)). The segment at 279–323 (PGFLLFPHGPAGPSDPPTRLSLSRSDDRRSTLTRAPAPTTRHDFS) is disordered. Threonine 309 is subject to Phosphothreonine. 360–367 (GQTGSGKT) serves as a coordination point for ATP.

It belongs to the TRAFAC class myosin-kinesin ATPase superfamily. Kinesin family. NCD subfamily. Binds NUBP1 and NUBP2. Interacts with PPP1R42.

Its subcellular location is the nucleus. It localises to the cytoplasm. It is found in the cytoskeleton. The protein localises to the microtubule organizing center. The protein resides in the centrosome. Its subcellular location is the spindle. It localises to the early endosome. Minus end-directed microtubule-dependent motor required for bipolar spindle formation. May contribute to movement of early endocytic vesicles. Regulates cilium formation and structure. This chain is Kinesin-like protein KIFC1, found in Cricetulus griseus (Chinese hamster).